Consider the following 771-residue polypeptide: Probable glycosyltransferase STELLO1 (771 aa).

The disordered stretch occupies residues 1 to 23 (MLVQDRAAPSPAKPPKSQIRELP). At 1-50 (MLVQDRAAPSPAKPPKSQIRELPTHQQIRRRFSEPKNLDFSTWFSENLSR) the chain is on the cytoplasmic side. A helical membrane pass occupies residues 51 to 71 (IAVFSLLIVTIVAFFFLYNTT). Residues 72 to 771 (DTASLLCFQS…EGDPLLMELV (700 aa)) lie on the Lumenal side of the membrane. N-linked (GlcNAc...) asparagine glycans are attached at residues Asn242 and Asn729.

This sequence belongs to the STELLO family. As to quaternary structure, homo- and heterodimer with STL2. Interacts with CESA1, CESA3, CESA4, CESA6, CESA7 and CESA8, but not with GOT1. In terms of tissue distribution, expressed in cells that are expanding or producing secondary cell walls.

The protein localises to the golgi apparatus membrane. Probable glycosyltransferase regulating the assembly and trafficking of cellulose synthase complexes. In Arabidopsis thaliana (Mouse-ear cress), this protein is Probable glycosyltransferase STELLO1.